An 802-amino-acid chain; its full sequence is Bifunctional purine biosynthetic protein ADE5,7 (802 aa).

Residues methionine 1–leucine 444 are GARS. The region spanning lysine 126–glutamate 339 is the ATP-grasp domain. Lysine 157 to serine 218 serves as a coordination point for ATP. Residues glutamate 307 and asparagine 309 each contribute to the Mg(2+) site. Residues leucine 455 to glutamate 788 are AIRS.

The protein in the N-terminal section; belongs to the GARS family. This sequence in the C-terminal section; belongs to the AIR synthase family. Homodimer. Mg(2+) serves as cofactor. Mn(2+) is required as a cofactor.

It localises to the cytoplasm. Its subcellular location is the cytosol. The catalysed reaction is 2-formamido-N(1)-(5-O-phospho-beta-D-ribosyl)acetamidine + ATP = 5-amino-1-(5-phospho-beta-D-ribosyl)imidazole + ADP + phosphate + H(+). The enzyme catalyses 5-phospho-beta-D-ribosylamine + glycine + ATP = N(1)-(5-phospho-beta-D-ribosyl)glycinamide + ADP + phosphate + H(+). It participates in purine metabolism; IMP biosynthesis via de novo pathway; 5-amino-1-(5-phospho-D-ribosyl)imidazole from N(2)-formyl-N(1)-(5-phospho-D-ribosyl)glycinamide: step 2/2. Its pathway is purine metabolism; IMP biosynthesis via de novo pathway; N(1)-(5-phospho-D-ribosyl)glycinamide from 5-phospho-alpha-D-ribose 1-diphosphate: step 2/2. In terms of biological role, catalyzes the second and fifth step in the 'de novo' purine biosynthesis pathway; contains phosphoribosylamine--glycine ligase (GARS) and phosphoribosylformylglycinamidine cyclo-ligase (AIRS) activities. This chain is Bifunctional purine biosynthetic protein ADE5,7, found in Cryptococcus neoformans var. grubii serotype A (strain H99 / ATCC 208821 / CBS 10515 / FGSC 9487) (Filobasidiella neoformans var. grubii).